We begin with the raw amino-acid sequence, 622 residues long: Threonine--tRNA ligase (622 aa).

The tract at residues 1–141 is editing domain; the sequence is MKTLLIHSDY…SRKITTERKE (141 aa). The segment at 199-498 is catalytic; the sequence is PHVKYIKEKE…TLENKPPALP (300 aa). Zn(2+) contacts are provided by Cys291, His343, and His467.

It belongs to the class-II aminoacyl-tRNA synthetase family. Homodimer. It depends on Zn(2+) as a cofactor.

It is found in the cytoplasm. The catalysed reaction is tRNA(Thr) + L-threonine + ATP = L-threonyl-tRNA(Thr) + AMP + diphosphate + H(+). Its function is as follows. Catalyzes the attachment of threonine to tRNA(Thr) in a two-step reaction: L-threonine is first activated by ATP to form Thr-AMP and then transferred to the acceptor end of tRNA(Thr). Also edits incorrectly charged L-seryl-tRNA(Thr). This Methanococcus maripaludis (strain C5 / ATCC BAA-1333) protein is Threonine--tRNA ligase.